The primary structure comprises 99 residues: MDPVDPKLEPWNHPGSQPQTACNNCYCKKCCYHCQMCFLKKGLGISYGRKKRSQRHRTPASLQDHQNSISKQPLSRTHGDPTGPKEQKKEVASKTETDP.

The interval 1-24 (MDPVDPKLEPWNHPGSQPQTACNN) is interaction with human CREBBP. The transactivation stretch occupies residues 1 to 48 (MDPVDPKLEPWNHPGSQPQTACNNCYCKKCCYHCQMCFLKKGLGISYG). The Zn(2+) site is built by Cys-22, Cys-25, and Cys-27. The cysteine-rich stretch occupies residues 22 to 37 (CNNCYCKKCCYHCQMC). The residue at position 28 (Lys-28) is an N6-acetyllysine; by host PCAF. Positions 30, 33, 34, and 37 each coordinate Zn(2+). Residues 38–48 (FLKKGLGISYG) form a core region. Residues 48-58 (GRKKRSQRHRT) are compositionally biased toward basic residues. The tract at residues 48-99 (GRKKRSQRHRTPASLQDHQNSISKQPLSRTHGDPTGPKEQKKEVASKTETDP) is disordered. The short motif at 49–57 (RKKRSQRHR) is the Nuclear localization signal, RNA-binding (TAR), and protein transduction element. Residues 49–86 (RKKRSQRHRTPASLQDHQNSISKQPLSRTHGDPTGPKE) are interaction with the host capping enzyme RNGTT. N6-acetyllysine; by host EP300 and GCN5L2 is present on residues Lys-50 and Lys-51. Position 52 is an asymmetric dimethylarginine; by host PRMT6 (Arg-52). Polar residues predominate over residues 60-75 (ASLQDHQNSISKQPLS). Lys-71 is covalently cross-linked (Glycyl lysine isopeptide (Lys-Gly) (interchain with G-Cter in ubiquitin)). Over residues 77-99 (THGDPTGPKEQKKEVASKTETDP) the composition is skewed to basic and acidic residues.

The protein belongs to the lentiviruses Tat family. In terms of assembly, interacts with host CCNT1. Associates with the P-TEFb complex composed at least of Tat, P-TEFb (CDK9 and CCNT1), TAR RNA, RNA Pol II. Recruits the HATs CREBBP, TAF1/TFIID, EP300, PCAF and GCN5L2. Interacts with host KAT5/Tip60; this interaction targets the latter to degradation. Interacts with the host deacetylase SIRT1. Interacts with host capping enzyme RNGTT; this interaction stimulates RNGTT. Binds to host KDR, and to the host integrins ITGAV/ITGB3 and ITGA5/ITGB1. Interacts with host KPNB1/importin beta-1 without previous binding to KPNA1/importin alpha-1. Interacts with EIF2AK2. Interacts with host nucleosome assembly protein NAP1L1; this interaction may be required for the transport of Tat within the nucleus, since the two proteins interact at the nuclear rim. Interacts with host C1QBP/SF2P32; this interaction involves lysine-acetylated Tat. Interacts with the host chemokine receptors CCR2, CCR3 and CXCR4. Interacts with host DPP4/CD26; this interaction may trigger an anti-proliferative effect. Interacts with host LDLR. Interacts with the host extracellular matrix metalloproteinase MMP1. Interacts with host PRMT6; this interaction mediates Tat's methylation. Interacts with, and is ubiquitinated by MDM2/Hdm2. Interacts with host PSMC3 and HTATIP2. Interacts with STAB1; this interaction may overcome SATB1-mediated repression of IL2 and IL2RA (interleukin) in T cells by binding to the same domain than HDAC1. Interacts (when acetylated) with human CDK13, thereby increasing HIV-1 mRNA splicing and promoting the production of the doubly spliced HIV-1 protein Nef. Interacts with host TBP; this interaction modulates the activity of transcriptional pre-initiation complex. Interacts with host RELA. Interacts with host PLSCR1; this interaction negatively regulates Tat transactivation activity by altering its subcellular distribution. In terms of processing, asymmetrical arginine methylation by host PRMT6 seems to diminish the transactivation capacity of Tat and affects the interaction with host CCNT1. Acetylation by EP300, CREBBP, GCN5L2/GCN5 and PCAF regulates the transactivation activity of Tat. EP300-mediated acetylation of Lys-50 promotes dissociation of Tat from the TAR RNA through the competitive binding to PCAF's bromodomain. In addition, the non-acetylated Tat's N-terminus can also interact with PCAF. PCAF-mediated acetylation of Lys-28 enhances Tat's binding to CCNT1. Lys-50 is deacetylated by SIRT1. Post-translationally, polyubiquitination by host MDM2 does not target Tat to degradation, but activates its transactivation function and fosters interaction with CCNT1 and TAR RNA. In terms of processing, phosphorylated by EIF2AK2 on serine and threonine residues adjacent to the basic region important for TAR RNA binding and function. Phosphorylation of Tat by EIF2AK2 is dependent on the prior activation of EIF2AK2 by dsRNA.

It localises to the host nucleus. The protein localises to the host nucleolus. The protein resides in the host cytoplasm. Its subcellular location is the secreted. Transcriptional activator that increases RNA Pol II processivity, thereby increasing the level of full-length viral transcripts. Recognizes a hairpin structure at the 5'-LTR of the nascent viral mRNAs referred to as the transactivation responsive RNA element (TAR) and recruits the cyclin T1-CDK9 complex (P-TEFb complex) that will in turn hyperphosphorylate the RNA polymerase II to allow efficient elongation. The CDK9 component of P-TEFb and other Tat-activated kinases hyperphosphorylate the C-terminus of RNA Pol II that becomes stabilized and much more processive. Other factors such as HTATSF1/Tat-SF1, SUPT5H/SPT5, and HTATIP2 are also important for Tat's function. Besides its effect on RNA Pol II processivity, Tat induces chromatin remodeling of proviral genes by recruiting the histone acetyltransferases (HATs) CREBBP, EP300 and PCAF to the chromatin. This also contributes to the increase in proviral transcription rate, especially when the provirus integrates in transcriptionally silent region of the host genome. To ensure maximal activation of the LTR, Tat mediates nuclear translocation of NF-kappa-B by interacting with host RELA. Through its interaction with host TBP, Tat may also modulate transcription initiation. Tat can reactivate a latently infected cell by penetrating in it and transactivating its LTR promoter. In the cytoplasm, Tat is thought to act as a translational activator of HIV-1 mRNAs. Functionally, extracellular circulating Tat can be endocytosed by surrounding uninfected cells via the binding to several surface receptors such as CD26, CXCR4, heparan sulfate proteoglycans (HSPG) or LDLR. Neurons are rarely infected, but they internalize Tat via their LDLR. Through its interaction with nuclear HATs, Tat is potentially able to control the acetylation-dependent cellular gene expression. Modulates the expression of many cellular genes involved in cell survival, proliferation or in coding for cytokines or cytokine receptors. Tat plays a role in T-cell and neurons apoptosis. Tat induced neurotoxicity and apoptosis probably contribute to neuroAIDS. Circulating Tat also acts as a chemokine-like and/or growth factor-like molecule that binds to specific receptors on the surface of the cells, affecting many cellular pathways. In the vascular system, Tat binds to ITGAV/ITGB3 and ITGA5/ITGB1 integrins dimers at the surface of endothelial cells and competes with bFGF for heparin-binding sites, leading to an excess of soluble bFGF. The polypeptide is Protein Tat (Homo sapiens (Human)).